Consider the following 155-residue polypeptide: Urease accessory protein UreE (155 aa).

It belongs to the UreE family.

Its subcellular location is the cytoplasm. In terms of biological role, involved in urease metallocenter assembly. Binds nickel. Probably functions as a nickel donor during metallocenter assembly. This Deinococcus radiodurans (strain ATCC 13939 / DSM 20539 / JCM 16871 / CCUG 27074 / LMG 4051 / NBRC 15346 / NCIMB 9279 / VKM B-1422 / R1) protein is Urease accessory protein UreE.